The following is a 556-amino-acid chain: Formate--tetrahydrofolate ligase (556 aa).

Position 65–72 (65–72 (TPAGEGKS)) interacts with ATP.

This sequence belongs to the formate--tetrahydrofolate ligase family.

The enzyme catalyses (6S)-5,6,7,8-tetrahydrofolate + formate + ATP = (6R)-10-formyltetrahydrofolate + ADP + phosphate. Its pathway is one-carbon metabolism; tetrahydrofolate interconversion. The sequence is that of Formate--tetrahydrofolate ligase from Streptococcus equi subsp. zooepidemicus (strain H70).